The following is a 496-amino-acid chain: Probable cytosol aminopeptidase (496 aa).

Mn(2+)-binding residues include lysine 258 and aspartate 263. Residue lysine 270 is part of the active site. 3 residues coordinate Mn(2+): aspartate 281, aspartate 340, and glutamate 342. Arginine 344 is an active-site residue.

It belongs to the peptidase M17 family. Requires Mn(2+) as cofactor.

Its subcellular location is the cytoplasm. The enzyme catalyses Release of an N-terminal amino acid, Xaa-|-Yaa-, in which Xaa is preferably Leu, but may be other amino acids including Pro although not Arg or Lys, and Yaa may be Pro. Amino acid amides and methyl esters are also readily hydrolyzed, but rates on arylamides are exceedingly low.. It catalyses the reaction Release of an N-terminal amino acid, preferentially leucine, but not glutamic or aspartic acids.. In terms of biological role, presumably involved in the processing and regular turnover of intracellular proteins. Catalyzes the removal of unsubstituted N-terminal amino acids from various peptides. This Helicobacter pylori (strain Shi470) protein is Probable cytosol aminopeptidase.